We begin with the raw amino-acid sequence, 163 residues long: MPSFDIVSEVDLQEARNGVDNAVREVESRFDFRGVEATIALNDANKTIKVLSESDFQVNQLLDILRAKLLKRGIEGASLDVPDEFVHSSKTWYVEAKLKQGIESAVQKKIVKLIKDSKLKVQAQIQGEEIRVTGKSRDDLQSVMALVRGGDLGQPFQFKNFRD.

Belongs to the YajQ family.

Nucleotide-binding protein. The protein is Nucleotide-binding protein YajQ of Salmonella paratyphi A (strain ATCC 9150 / SARB42).